The sequence spans 326 residues: MNRIGYIGSKLKLKDWIFEEISKRTDDTYTKFADLFAGSCIMTHEALEKKYECISNDLETYSYVIMNGLKCPFSDKLQNIIETLDDLDTKDMVIPGFVTLTYSPRGNRMYFTEDNAMRIDIIRENIERMKERVSTDEYNFLLASLLTSADSVKNTSVVYGAYLKKFKKTALKRMVFAPLHTRSTTVTLETFNEDATELGIKTDIAYVDPPYNSRQYGANYFVLNQILTPKEIGNGVTGLPEYKKSSFCRKQEVAMSFHKMLKNVSARLFVISYSSESLLSKGDMVALLSQYGKCEVVVRNHKRFKAQISAVGNDVEEYLFFVYIEQ.

It belongs to the N(4)/N(6)-methyltransferase family.

The catalysed reaction is a 2'-deoxyadenosine in DNA + S-adenosyl-L-methionine = an N(6)-methyl-2'-deoxyadenosine in DNA + S-adenosyl-L-homocysteine + H(+). Its function is as follows. An alpha subtype methylase that recognizes the double-stranded sequence 5'-CATG-3', methylates A-2 on both strands and protects the DNA from cleavage by the CviAII endonuclease. The polypeptide is Type II methyltransferase M.CviAII (CVIAIIM) (Paramecium bursaria Chlorella virus 1 (PBCV-1)).